The chain runs to 79 residues: Conotoxin Vi6.1 (79 aa).

An N-terminal signal peptide occupies residues 1–22 (MKLTCVLIITVLFLTASQLITA). The propeptide occupies 23–47 (DYSRDQRQYRAVRLGDEMRNFKGAR). 3 cysteine pairs are disulfide-bonded: Cys-49/Cys-62, Cys-56/Cys-67, and Cys-61/Cys-77. A 4-hydroxyproline mark is found at Pro-60 and Pro-63.

In terms of tissue distribution, expressed by the venom duct.

It localises to the secreted. In terms of biological role, ion channel inhibitor that inhibits the increase in intracellular calcium upon depolarization in DRG neurons. In vivo, both intraperitoneal and intracranial injections into mice induce hyperactivity. This is Conotoxin Vi6.1 from Conus virgo (Virgin cone).